The sequence spans 417 residues: Serine hydroxymethyltransferase (417 aa).

(6S)-5,6,7,8-tetrahydrofolate contacts are provided by residues L121 and 125–127 (GHL). At K229 the chain carries N6-(pyridoxal phosphate)lysine. 355 to 357 (SPF) is a (6S)-5,6,7,8-tetrahydrofolate binding site.

The protein belongs to the SHMT family. Homodimer. It depends on pyridoxal 5'-phosphate as a cofactor.

The protein localises to the cytoplasm. It carries out the reaction (6R)-5,10-methylene-5,6,7,8-tetrahydrofolate + glycine + H2O = (6S)-5,6,7,8-tetrahydrofolate + L-serine. It participates in one-carbon metabolism; tetrahydrofolate interconversion. It functions in the pathway amino-acid biosynthesis; glycine biosynthesis; glycine from L-serine: step 1/1. In terms of biological role, catalyzes the reversible interconversion of serine and glycine with tetrahydrofolate (THF) serving as the one-carbon carrier. This reaction serves as the major source of one-carbon groups required for the biosynthesis of purines, thymidylate, methionine, and other important biomolecules. Also exhibits THF-independent aldolase activity toward beta-hydroxyamino acids, producing glycine and aldehydes, via a retro-aldol mechanism. This Xanthomonas euvesicatoria pv. vesicatoria (strain 85-10) (Xanthomonas campestris pv. vesicatoria) protein is Serine hydroxymethyltransferase.